Consider the following 784-residue polypeptide: Protein translocase subunit SecA 2 (784 aa).

Residues Q94, 112-116 (GEGKT), and D501 each bind ATP.

The protein belongs to the SecA family. In terms of assembly, monomer and homodimer. Part of the essential Sec protein translocation apparatus which comprises SecA, SecYEG and auxiliary proteins SecDF. Other proteins may also be involved.

The protein resides in the cell membrane. The protein localises to the cytoplasm. It catalyses the reaction ATP + H2O + cellular proteinSide 1 = ADP + phosphate + cellular proteinSide 2.. In terms of biological role, part of the Sec protein translocase complex. Interacts with the SecYEG preprotein conducting channel. Has a central role in coupling the hydrolysis of ATP to the transfer of proteins into and across the cell membrane, serving as an ATP-driven molecular motor driving the stepwise translocation of polypeptide chains across the membrane. This Mycolicibacterium smegmatis (strain ATCC 700084 / mc(2)155) (Mycobacterium smegmatis) protein is Protein translocase subunit SecA 2.